The following is a 218-amino-acid chain: Histone H1.1 (218 aa).

The segment at 1-42 (MSEVALPAPAASTSPEKPSAGKKAKKPAKAAAAAKKKPAGPS) is disordered. At Ser2 the chain carries N-acetylserine. 2 positions are modified to phosphoserine: Ser2 and Ser12. Lys17 carries the post-translational modification N6-acetyllysine. A compositionally biased stretch (basic residues) spans 20–38 (AGKKAKKPAKAAAAAKKKP). Lys37 carries the post-translational modification N6-(beta-hydroxybutyryl)lysine. Residues 39–112 (AGPSVSELIV…GASGSFKLNK (74 aa)) form the H15 domain. Ser44 carries the post-translational modification Phosphoserine. Lys55 bears the N6-(beta-hydroxybutyryl)lysine mark. A Citrulline modification is found at Arg57. Lys67 bears the N6-(beta-hydroxybutyryl)lysine mark. Lys78 carries the post-translational modification N6-acetyllysine. An N6-(beta-hydroxybutyryl)lysine modification is found at Lys88. The residue at position 93 (Lys93) is an N6-(beta-hydroxybutyryl)lysine; alternate. At Lys93 the chain carries N6-acetyllysine; alternate. Ser107 carries the phosphoserine; by PKC modification. Residue Lys109 is modified to N6-(beta-hydroxybutyryl)lysine. Residues 116 to 218 (SVDAKPTATK…KPKKAAPKKK (103 aa)) form a disordered region. Low complexity predominate over residues 119 to 149 (AKPTATKVATKTKVTSASKKPKKASGAAAAK). An N6-acetyllysine modification is found at Lys125. Composition is skewed to basic residues over residues 150 to 183 (KSVK…KKVA) and 190 to 218 (KAVK…PKKK). Thr206 is subject to Phosphothreonine.

This sequence belongs to the histone H1/H5 family. In terms of assembly, interacts with DFFB. Post-translationally, H1 histones are progressively phosphorylated during the cell cycle, becoming maximally phosphorylated during late G2 phase and M phase, and being dephosphorylated sharply thereafter. In terms of processing, citrullination at Arg-57 (H1R54ci) by PADI4 takes place within the DNA-binding site of H1 and results in its displacement from chromatin and global chromatin decondensation, thereby promoting pluripotency and stem cell maintenance.

It is found in the nucleus. The protein resides in the chromosome. Its function is as follows. H1 histones bind to linker DNA between nucleosomes forming the macromolecular structure known as the chromatin fiber. H1 histones are necessary for the condensation of nucleosome chains into higher-order structured fibers. Also acts as a regulator of individual gene transcription through chromatin remodeling. The chain is Histone H1.1 from Bos taurus (Bovine).